The sequence spans 240 residues: Orotidine 5'-phosphate decarboxylase (240 aa).

Residues Asp19, Lys41, 68 to 77 (DYKYYDIEET), Thr123, Arg184, Gln193, Gly213, and Arg214 each bind substrate. The active-site Proton donor is the Lys70.

This sequence belongs to the OMP decarboxylase family. Type 1 subfamily. As to quaternary structure, homodimer.

It catalyses the reaction orotidine 5'-phosphate + H(+) = UMP + CO2. Its pathway is pyrimidine metabolism; UMP biosynthesis via de novo pathway; UMP from orotate: step 2/2. Functionally, catalyzes the decarboxylation of orotidine 5'-monophosphate (OMP) to uridine 5'-monophosphate (UMP). The chain is Orotidine 5'-phosphate decarboxylase from Nitrobacter winogradskyi (strain ATCC 25391 / DSM 10237 / CIP 104748 / NCIMB 11846 / Nb-255).